Consider the following 200-residue polypeptide: ADP-ribose 1''-phosphate phosphatase (200 aa).

The 200-residue stretch at 1 to 200 (MDPPSVRSKI…EVTVVRPHGG (200 aa)) folds into the Macro domain. Substrate-binding positions include 15 to 17 (GDL), 29 to 31 (ACN), 36 to 41 (WGKGIA), and 169 to 175 (FNAGLFG).

Belongs to the POA1 family.

It carries out the reaction ADP-alpha-D-ribose 1''-phosphate + H2O = ADP-D-ribose + phosphate. Its function is as follows. Highly specific phosphatase involved in the metabolism of ADP-ribose 1''-phosphate (Appr1p) which is produced as a consequence of tRNA splicing. This Aspergillus fumigatus (strain ATCC MYA-4609 / CBS 101355 / FGSC A1100 / Af293) (Neosartorya fumigata) protein is ADP-ribose 1''-phosphate phosphatase (poa1).